A 191-amino-acid chain; its full sequence is Protein G1-like1 (191 aa).

The interval 1–29 (MDMIGMASPAESPGGGGTARPSRYESQKR) is disordered. In terms of domain architecture, ALOG spans 23 to 150 (RYESQKRRDW…ARGIAYEKKR (128 aa)). A Nuclear localization signal motif is present at residues 148 to 152 (KKRRK). The stretch at 152 to 179 (KRAAASHTKQKQQQQQLVEQAAAAAEAH) forms a coiled coil.

The protein belongs to the plant homeotic and developmental regulators ALOG protein family.

It is found in the nucleus. Probable transcription regulator that acts as a developmental regulator by promoting cell growth in response to light. This Oryza sativa subsp. indica (Rice) protein is Protein G1-like1.